The sequence spans 666 residues: Secreted protein ARB_01864 (666 aa).

Residues 1–18 (MRFSTLVSLAAWAAAALA) form the signal peptide. Residues Asn160, Asn216, Asn342, Asn405, Asn594, Asn600, and Asn662 are each glycosylated (N-linked (GlcNAc...) asparagine). Residues 323–353 (RGSMKPRGVPNPTRRAIKGNATTSTQPYQHP) form a disordered region.

It localises to the secreted. This is Secreted protein ARB_01864 from Arthroderma benhamiae (strain ATCC MYA-4681 / CBS 112371) (Trichophyton mentagrophytes).